Reading from the N-terminus, the 375-residue chain is Growth/differentiation factor 8 (375 aa).

The N-terminal stretch at methionine 1–leucine 23 is a signal peptide. Residues aspartate 24–arginine 266 constitute a propeptide that is removed on maturation. An N-linked (GlcNAc...) asparagine glycan is attached at asparagine 71. 4 disulfide bridges follow: cysteine 272–cysteine 282, cysteine 281–cysteine 340, cysteine 309–cysteine 372, and cysteine 313–cysteine 374.

This sequence belongs to the TGF-beta family. Homodimer; disulfide-linked.

The protein resides in the secreted. Functionally, acts specifically as a negative regulator of skeletal muscle growth. This Gallus gallus (Chicken) protein is Growth/differentiation factor 8 (MSTN).